The following is a 357-amino-acid chain: Dynein axonemal assembly factor 10 (357 aa).

WD repeat units follow at residues 63–105 (EKAK…MPVY), 115–154 (NAID…DPVA), 162–205 (ENKR…LRWE), 207–249 (NIKN…PTKG), 257–297 (AHKS…QRSK), and 319–357 (LSTQ…LNKI).

In terms of assembly, component of the PAQosome complex which is responsible for the biogenesis of several protein complexes and which consists of R2TP complex members RUVBL1, RUVBL2, RPAP3 and PIH1D1, URI complex members PFDN2, PFDN6, PDRG1, UXT and URI1 as well as ASDURF, POLR2E and DNAAF10/WDR92. Interacts with PIH1D1; the interaction associates DNAAF10 with the R2TP complex. Interacts with several dynein axonemal assembly factors. As to expression, widely expressed with the highest expression in testis.

It is found in the dynein axonemal particle. Functionally, key assembly factor specifically required for the stability of axonemal dynein heavy chains in cytoplasm. This Homo sapiens (Human) protein is Dynein axonemal assembly factor 10.